We begin with the raw amino-acid sequence, 339 residues long: NADPH dehydrogenase (339 aa).

21-24 (PPMC) contributes to the FMN binding site. Tyr-26 is a substrate binding site. FMN is bound by residues Ala-57 and Gln-99. 162-165 (HGAH) is a binding site for substrate. FMN contacts are provided by residues Arg-215 and 307–308 (GR).

The protein belongs to the NADH:flavin oxidoreductase/NADH oxidase family. NamA subfamily. In terms of assembly, homotetramer. Requires FMN as cofactor.

It carries out the reaction A + NADPH + H(+) = AH2 + NADP(+). Functionally, catalyzes the reduction of the double bond of an array of alpha,beta-unsaturated aldehydes and ketones. It also reduces the nitro group of nitroester and nitroaromatic compounds. It could have a role in detoxification processes. This is NADPH dehydrogenase from Clostridium acetobutylicum (strain ATCC 824 / DSM 792 / JCM 1419 / IAM 19013 / LMG 5710 / NBRC 13948 / NRRL B-527 / VKM B-1787 / 2291 / W).